Consider the following 178-residue polypeptide: Protein modigliani (178 aa).

Probably homodimerizes. Component of the MTV complex, composed of moi/modigliani, tea and ver/verrocchio. Interacts with ver/verrochio and tea (via C-terminus); the interactions are direct and require fully intact moi/modigliani and ver/verrocchio. The MTV complex is recruited to telomeres by the HipHop-HOAP complex, consisting of HipHop, cav/HOAP and Su(var)205/HP1 to form the terminin telomere-capping complex. Interacts with cav/HOAP and Su(var)205/HP1; the interactions are direct. Probably interacts with peo (via N-terminus and UBC domain).

It localises to the nucleus. It is found in the chromosome. The protein localises to the telomere. Functionally, part of the MTV complex that associates with the HipHop-HOAP complex to form the terminin telomere-capping complex involved in telomere maintenance and prevention of telomere fusion. Potentially functions downstream of mei-41/ATR. As part of the MTV complex binds single stranded DNA in a sequence-independent manner, protecting it from degradation. This Drosophila melanogaster (Fruit fly) protein is Protein modigliani.